The primary structure comprises 335 residues: Nuclear distribution protein nudE homolog 1 (335 aa).

A self-association region spans residues M1 to I93. Residues W18–K188 are a coiled coil. Positions E88–L156 are interaction with PAFAH1B1. The tract at residues Q167–A290 is interaction with CENPF. The interval A181–T246 is disordered. A compositionally biased stretch (polar residues) spans T204–S214. S211 carries the post-translational modification Phosphoserine. 2 positions are modified to phosphothreonine: T215 and T228. Residues S231 and S239 each carry the phosphoserine modification. Phosphothreonine is present on residues T243 and T246. A lipid anchor (S-palmitoyl cysteine; by ZDHHC2, ZDHHC3 and ZDHHC7) is attached at C274. Residues Y279–C335 are disordered. Residue S282 is modified to Phosphoserine. Residues K296–P305 are compositionally biased toward basic and acidic residues. Position 309 is a phosphoserine (S309). The span at S325–C335 shows a compositional bias: low complexity.

It belongs to the nudE family. In terms of assembly, homodimer. Interacts with CNTRL, LIS1, dynein, SLMAP and TCP1. Interacts with CENPF, dynactin, tubulin gamma, PAFAH1B1, PCM1 and PCNT. Interacts with ZNF365. Interacts with GTP-bound RAB9A and RAB9B; the interaction leads to RAB9-dynein motor tethering. Interacts (via C-terminus) with MCRS1 (via C-terminus); phosphorylation of NDE1 inhibits the interaction. Post-translationally, phosphorylated in mitosis. Phosphorylated in vitro by CDC2. Phosphorylation at Thr-246 is essential for the G2/M transition. In terms of tissue distribution, expressed in the neuroepithelium throughout the developing brain, including the cerebral cortex and cerebellum.

Its subcellular location is the cytoplasm. It localises to the cytoskeleton. The protein localises to the microtubule organizing center. It is found in the centrosome. The protein resides in the chromosome. Its subcellular location is the centromere. It localises to the kinetochore. The protein localises to the spindle. It is found in the cleavage furrow. The protein resides in the cytoplasmic vesicle membrane. Functionally, required for centrosome duplication and formation and function of the mitotic spindle. Essential for the development of the cerebral cortex. May regulate the production of neurons by controlling the orientation of the mitotic spindle during division of cortical neuronal progenitors of the proliferative ventricular zone of the brain. Orientation of the division plane perpendicular to the layers of the cortex gives rise to two proliferative neuronal progenitors whereas parallel orientation of the division plane yields one proliferative neuronal progenitor and a postmitotic neuron. A premature shift towards a neuronal fate within the progenitor population may result in an overall reduction in the final number of neurons and an increase in the number of neurons in the deeper layers of the cortex. Acts as a RAB9A/B effector that tethers RAB9-associated late endosomes to the dynein motor for their retrograde transport to the trans-Golgi network. The protein is Nuclear distribution protein nudE homolog 1 of Homo sapiens (Human).